Reading from the N-terminus, the 1402-residue chain is Transcription elongation factor spt-6 (1402 aa).

The disordered stretch occupies residues 1 to 199 (MSNSMRDLID…PKDRGLNIDT (199 aa)). Composition is skewed to acidic residues over residues 10-28 (DGEAELDDEEDDESFDEEA), 40-52 (DSSEEEEDDEDEE), 62-75 (IVDEDEEDEAEDSD), and 90-102 (EEEEQLDEEDLDL). The segment covering 123–135 (HRDDHRPTERRGL) has biased composition (basic and acidic residues). A compositionally biased stretch (acidic residues) spans 161–176 (DEFDDFIEDDYPEDDE). Residues 177 to 199 (ERRHREEDEEVARPKDRGLNIDT) show a composition bias toward basic and acidic residues. Positions 1094–1161 (GMIVAANVRV…KEFVSKLSMR (68 aa)) constitute an S1 motif domain. Residues 1209–1306 (PLFKPFNSTQ…KKVDELMQCD (98 aa)) enclose the SH2 domain.

This sequence belongs to the SPT6 family.

The protein resides in the nucleus. The protein localises to the chromosome. Histone H3-H4 chaperone that plays a role in maintenance of chromatin structure during RNA polymerase II transcription elongation thereby repressing transcription initiation from cryptic promoters. Mediates the reassembly of nucleosomes onto the promoters of at least a selected set of genes during repression; the nucleosome reassembly is essential for transcriptional repression. Essential for viability. The protein is Transcription elongation factor spt-6 (spt-6) of Neurospora crassa (strain ATCC 24698 / 74-OR23-1A / CBS 708.71 / DSM 1257 / FGSC 987).